The following is a 556-amino-acid chain: Phosphoglucomutase (556 aa).

Positions 22 and 114 each coordinate alpha-D-glucose 1,6-bisphosphate. The active-site Phosphoserine intermediate is the Ser114. The Mg(2+) site is built by Ser114, Asp279, Asp281, and Asp283. Phosphoserine is present on Ser114. Residues Asp283, Arg284, Thr347, Glu366, Ser368, and Lys379 each contribute to the alpha-D-glucose 1,6-bisphosphate site.

It belongs to the phosphohexose mutase family. In terms of assembly, monomer. Mg(2+) is required as a cofactor.

Its subcellular location is the cytoplasm. The enzyme catalyses alpha-D-glucose 1-phosphate = alpha-D-glucose 6-phosphate. The catalysed reaction is O-phospho-L-seryl-[protein] + alpha-D-glucose 1-phosphate = alpha-D-glucose 1,6-bisphosphate + L-seryl-[protein]. It catalyses the reaction alpha-D-glucose 1,6-bisphosphate + L-seryl-[protein] = O-phospho-L-seryl-[protein] + alpha-D-glucose 6-phosphate. Its function is as follows. Catalyzes the reversible isomerization of alpha-D-glucose 1-phosphate to alpha-D-glucose 6-phosphate. The mechanism proceeds via the intermediate compound alpha-D-glucose 1,6-bisphosphate. Key enzyme in hexose metabolism. The reverse reaction is an essential step for biosynthesis because glucose 1-phosphate is the starting point for the synthesis of UDP-glucose, which acts as a precursor for the synthesis of oligosaccharides and trehalose. The polypeptide is Phosphoglucomutase (pgmB) (Emericella nidulans (strain FGSC A4 / ATCC 38163 / CBS 112.46 / NRRL 194 / M139) (Aspergillus nidulans)).